The following is a 199-amino-acid chain: Chaperone protein TorD (199 aa).

This sequence belongs to the TorD/DmsD family. TorD subfamily.

The protein localises to the cytoplasm. In terms of biological role, involved in the biogenesis of TorA. Acts on TorA before the insertion of the molybdenum cofactor and, as a result, probably favors a conformation of the apoenzyme that is competent for acquiring the cofactor. The polypeptide is Chaperone protein TorD (Escherichia coli O139:H28 (strain E24377A / ETEC)).